A 194-amino-acid chain; its full sequence is Histone H1.0 (194 aa).

N-acetylmethionine is present on Met-1. Positions 1–11 are enriched in low complexity; the sequence is MTENSTSTPAA. Residues 1–29 are disordered; that stretch reads MTENSTSTPAAKPKRAKASKKSTDHPKYS. An N-acetylthreonine; in Histone H1.0, N-terminally processed modification is found at Thr-2. The 74-residue stretch at 24-97 folds into the H15 domain; the sequence is DHPKYSDMIV…GASGSFRLAK (74 aa). Arg-42 carries the citrulline modification. The tract at residues 83–194 is disordered; that stretch reads QTKGVGASGS…SSAKRTGKKK (112 aa). At Ser-104 the chain carries ADP-ribosylserine. A compositionally biased stretch (basic residues) spans 105–194; the sequence is VAFKKTKKEV…SSAKRTGKKK (90 aa).

It belongs to the histone H1/H5 family. In terms of processing, ADP-ribosylated on Ser-104 in response to DNA damage.

Its subcellular location is the nucleus. It localises to the chromosome. Histones H1 are necessary for the condensation of nucleosome chains into higher-order structures. The histones H1.0 are found in cells that are in terminal stages of differentiation or that have low rates of cell division. The sequence is that of Histone H1.0 (H1-0) from Bos taurus (Bovine).